Reading from the N-terminus, the 105-residue chain is UPF0045 protein ECM15 (105 aa).

This sequence belongs to the UPF0045 family.

This chain is UPF0045 protein ECM15 (ECM15), found in Eremothecium gossypii (strain ATCC 10895 / CBS 109.51 / FGSC 9923 / NRRL Y-1056) (Yeast).